The primary structure comprises 166 residues: Cyclic pyranopterin monophosphate synthase (166 aa).

Substrate is bound by residues 75–77 (MCH) and 115–116 (ME). Residue aspartate 130 is part of the active site.

It belongs to the MoaC family. Homohexamer; trimer of dimers.

The catalysed reaction is (8S)-3',8-cyclo-7,8-dihydroguanosine 5'-triphosphate = cyclic pyranopterin phosphate + diphosphate. The protein operates within cofactor biosynthesis; molybdopterin biosynthesis. Functionally, catalyzes the conversion of (8S)-3',8-cyclo-7,8-dihydroguanosine 5'-triphosphate to cyclic pyranopterin monophosphate (cPMP). The protein is Cyclic pyranopterin monophosphate synthase of Shouchella clausii (strain KSM-K16) (Alkalihalobacillus clausii).